The primary structure comprises 429 residues: Glutamyl-tRNA reductase (429 aa).

Substrate-binding positions include 49 to 52 (TCNR), S107, 112 to 114 (EPQ), and Q118. C50 acts as the Nucleophile in catalysis. An NADP(+)-binding site is contributed by 187–192 (GAGKTI).

This sequence belongs to the glutamyl-tRNA reductase family. As to quaternary structure, homodimer.

It catalyses the reaction (S)-4-amino-5-oxopentanoate + tRNA(Glu) + NADP(+) = L-glutamyl-tRNA(Glu) + NADPH + H(+). It participates in porphyrin-containing compound metabolism; protoporphyrin-IX biosynthesis; 5-aminolevulinate from L-glutamyl-tRNA(Glu): step 1/2. Catalyzes the NADPH-dependent reduction of glutamyl-tRNA(Glu) to glutamate 1-semialdehyde (GSA). The protein is Glutamyl-tRNA reductase of Marinobacter nauticus (strain ATCC 700491 / DSM 11845 / VT8) (Marinobacter aquaeolei).